A 320-amino-acid chain; its full sequence is Thiamine thiazole synthase (320 aa).

Residues C82, 103–104 (EA), G111, and V176 contribute to the substrate site. Residue C209 is modified to 2,3-didehydroalanine (Cys). Substrate contacts are provided by residues D211, H226, M278, and 288–290 (RMG).

This sequence belongs to the THI4 family. Homooctamer. Fe cation is required as a cofactor. Post-translationally, during the catalytic reaction, a sulfide is transferred from Cys-209 to a reaction intermediate, generating a dehydroalanine residue.

It is found in the cytoplasm. The protein localises to the nucleus. The enzyme catalyses [ADP-thiazole synthase]-L-cysteine + glycine + NAD(+) = [ADP-thiazole synthase]-dehydroalanine + ADP-5-ethyl-4-methylthiazole-2-carboxylate + nicotinamide + 3 H2O + 2 H(+). Involved in biosynthesis of the thiamine precursor thiazole. Catalyzes the conversion of NAD and glycine to adenosine diphosphate 5-(2-hydroxyethyl)-4-methylthiazole-2-carboxylic acid (ADT), an adenylated thiazole intermediate. The reaction includes an iron-dependent sulfide transfer from a conserved cysteine residue of the protein to a thiazole intermediate. The enzyme can only undergo a single turnover, which suggests it is a suicide enzyme. May have additional roles in adaptation to various stress conditions and in DNA damage tolerance. This chain is Thiamine thiazole synthase (sti35), found in Fusarium oxysporum f. sp. lycopersici (strain 4287 / CBS 123668 / FGSC 9935 / NRRL 34936) (Fusarium vascular wilt of tomato).